The chain runs to 197 residues: Female-specific protein transformer (197 aa).

Basic and acidic residues-rich tracts occupy residues 1-17 and 24-39; these read MKMDADSSGTQHRDSRG and REREYHGRSSERDSRK. 2 disordered regions span residues 1–136 and 158–197; these read MKMD…PKII and GYQRLPRPPPFPPAPYRYRQRPPFIGVPRFGYRNAGRPPY. 2 stretches are compositionally biased toward basic residues: residues 58 to 75 and 84 to 127; these read RRLRQRAHQSTRRTRSRS and SRHR…RSPH. Residues 163–172 are compositionally biased toward pro residues; sequence PRPPPFPPAP.

It localises to the nucleus speckle. In terms of biological role, member of the regulatory pathway controlling female somatic sexual differentiation, regulated by Sxl. Activates dsx female-specific splicing by promoting the formation of a splicing enhancer complex which consists of tra, tra2 and sr proteins. Together with tra-2, plays a role in switching fru splicing from the male-specific pattern to the female-specific pattern through activation of the female-specific fru 5'-splice site. No known function in males. This chain is Female-specific protein transformer (tra), found in Drosophila melanogaster (Fruit fly).